Reading from the N-terminus, the 683-residue chain is DNA-directed RNA polymerase subunit beta' (683 aa).

Zn(2+) contacts are provided by C69, C71, C87, and C90. Residues D489, D491, and D493 each coordinate Mg(2+).

It belongs to the RNA polymerase beta' chain family. RpoC1 subfamily. As to quaternary structure, in plastids the minimal PEP RNA polymerase catalytic core is composed of four subunits: alpha, beta, beta', and beta''. When a (nuclear-encoded) sigma factor is associated with the core the holoenzyme is formed, which can initiate transcription. Mg(2+) serves as cofactor. It depends on Zn(2+) as a cofactor.

It localises to the plastid. It is found in the chloroplast. It catalyses the reaction RNA(n) + a ribonucleoside 5'-triphosphate = RNA(n+1) + diphosphate. DNA-dependent RNA polymerase catalyzes the transcription of DNA into RNA using the four ribonucleoside triphosphates as substrates. The protein is DNA-directed RNA polymerase subunit beta' of Saccharum hybrid (Sugarcane).